A 958-amino-acid chain; its full sequence is Collagen alpha-1(I) chain (958 aa).

The segment at 1-958 (GPMGPSGPRG…PGPPGPPGPP (958 aa)) is disordered. Residues 50–64 (NGDDGEAGKPGRPGE) show a composition bias toward basic and acidic residues. At Ser-92 the chain carries Phosphoserine. Composition is skewed to low complexity over residues 100 to 116 (DAGPAGPKGEPGSPGEN) and 139 to 152 (PAGARGNDGATGAA). The segment covering 154–166 (PPGPTGPAGPPGF) has biased composition (pro residues). Low complexity predominate over residues 216–232 (APGIAGAPGFPGARGPS). The segment covering 294 to 303 (GERGGPGSRG) has biased composition (gly residues). 8 stretches are compositionally biased toward low complexity: residues 304–335 (FPGSDGVAGPKGPAGERGAPGPAGPKGSPGEA), 347–373 (KGITGSPGSPGPDGKTGPPGPAGQDGR), 382–401 (ARGQAGVMGFPGPKGAAGEP), 557–571 (SGPSGPAGPTGARGA), 584–614 (AGFAGPPGADGQPGAKGEPGDAGAKGDAGPA), 640–656 (SAGPPGATGFPGAAGRV), 685–694 (ETGPAGRPGE), and 704–728 (AGEKGSPGADGPAGAPGTPGPQGIA). Position 560 is a phosphoserine (Ser-560). 2 stretches are compositionally biased toward pro residues: residues 769–779 (PPGPVGPPGIA) and 808–823 (AGPPGAPGAPGAPGPV). The segment covering 859-873 (RGDKGETGEQGDRGI) has biased composition (basic and acidic residues). Residues 892-925 (PGEQGPSGASGPAGPRGPPGSAGAPGKDGINGIP) are compositionally biased toward low complexity. Over residues 943–958 (VGPPGPPGPPGPPGPP) the composition is skewed to pro residues.

This sequence belongs to the fibrillar collagen family. In terms of assembly, trimers of one alpha 2(I) and two alpha 1(I) chains. Post-translationally, prolines at the third position of the tripeptide repeating unit (G-X-Y) are hydroxylated in some or all of the chains. In terms of tissue distribution, forms the fibrils of tendon, ligaments and bones. In bones, the fibrils are mineralized with calcium hydroxyapatite.

The protein localises to the secreted. It is found in the extracellular space. Its subcellular location is the extracellular matrix. Type I collagen is a member of group I collagen (fibrillar forming collagen). The polypeptide is Collagen alpha-1(I) chain (Macrauchenia sp).